Here is a 454-residue protein sequence, read N- to C-terminus: Chromosomal replication initiator protein DnaA (454 aa).

The tract at residues Met-1 to Ile-74 is domain I, interacts with DnaA modulators. The interval Ile-74 to Leu-116 is domain II. The segment at Pro-88–Phe-112 is disordered. Over residues Lys-101–Phe-112 the composition is skewed to basic and acidic residues. A domain III, AAA+ region region spans residues Arg-117–Ala-333. The ATP site is built by Gly-161, Gly-163, Lys-164, and Thr-165. A domain IV, binds dsDNA region spans residues Thr-334–Arg-454.

Belongs to the DnaA family. Oligomerizes as a right-handed, spiral filament on DNA at oriC.

The protein localises to the cytoplasm. Functionally, plays an essential role in the initiation and regulation of chromosomal replication. ATP-DnaA binds to the origin of replication (oriC) to initiate formation of the DNA replication initiation complex once per cell cycle. Binds the DnaA box (a 9 base pair repeat at the origin) and separates the double-stranded (ds)DNA. Forms a right-handed helical filament on oriC DNA; dsDNA binds to the exterior of the filament while single-stranded (ss)DNA is stabiized in the filament's interior. The ATP-DnaA-oriC complex binds and stabilizes one strand of the AT-rich DNA unwinding element (DUE), permitting loading of DNA polymerase. After initiation quickly degrades to an ADP-DnaA complex that is not apt for DNA replication. Binds acidic phospholipids. The sequence is that of Chromosomal replication initiator protein DnaA from Lactobacillus delbrueckii subsp. bulgaricus (strain ATCC 11842 / DSM 20081 / BCRC 10696 / JCM 1002 / NBRC 13953 / NCIMB 11778 / NCTC 12712 / WDCM 00102 / Lb 14).